Reading from the N-terminus, the 128-residue chain is MGLYALTAIGAGAALGAWLRWWFGMTLNPLFPTLPLGTLAANLTGGYLIGAAIEYFHHNSFLPPEARLFAITGFLGGLTTFSTFSAETVTLLLRGQYAWTFVIIFSHLTGSLVMTILGIMTVKWLAQH.

4 consecutive transmembrane segments (helical) span residues 3–23 (LYALTAIGAGAALGAWLRWWF), 33–53 (TLPLGTLAANLTGGYLIGAAI), 69–89 (FAITGFLGGLTTFSTFSAETV), and 99–119 (WTFVIIFSHLTGSLVMTILGI). Residues Gly-76 and Thr-79 each coordinate Na(+).

This sequence belongs to the fluoride channel Fluc/FEX (TC 1.A.43) family.

Its subcellular location is the cell inner membrane. It catalyses the reaction fluoride(in) = fluoride(out). Na(+) is not transported, but it plays an essential structural role and its presence is essential for fluoride channel function. Functionally, fluoride-specific ion channel. Important for reducing fluoride concentration in the cell, thus reducing its toxicity. The chain is Fluoride-specific ion channel FluC from Nitrosospira multiformis (strain ATCC 25196 / NCIMB 11849 / C 71).